A 299-amino-acid chain; its full sequence is ATP phosphoribosyltransferase (299 aa).

This sequence belongs to the ATP phosphoribosyltransferase family. Long subfamily. Equilibrium between an active dimeric form, an inactive hexameric form and higher aggregates. Interconversion between the various forms is largely reversible and is influenced by the natural substrates and inhibitors of the enzyme. Mg(2+) serves as cofactor.

It is found in the cytoplasm. It catalyses the reaction 1-(5-phospho-beta-D-ribosyl)-ATP + diphosphate = 5-phospho-alpha-D-ribose 1-diphosphate + ATP. It participates in amino-acid biosynthesis; L-histidine biosynthesis; L-histidine from 5-phospho-alpha-D-ribose 1-diphosphate: step 1/9. Feedback inhibited by histidine. In terms of biological role, catalyzes the condensation of ATP and 5-phosphoribose 1-diphosphate to form N'-(5'-phosphoribosyl)-ATP (PR-ATP). Has a crucial role in the pathway because the rate of histidine biosynthesis seems to be controlled primarily by regulation of HisG enzymatic activity. The protein is ATP phosphoribosyltransferase of Buchnera aphidicola subsp. Diuraphis noxia.